We begin with the raw amino-acid sequence, 683 residues long: MSEPRKILVTSALPYANGSIHLGHMLEYIQTDMWVRFQKHRGNQCIYVCADDAHGSAIMLRAEKEGITPEQLIANVQAEHSADFAEFLVDFDNFHSTHAEENRELSSQIYLKLRDAGHIAQRSITQYFDPEKKMFLADRFIKGTCPKCGTEDQYGDNCEKCGATYAPTDLKDPKSAISGATPVLKDSQHFFFKLPDFQEMLQAWTRSGTLQDAVANKIAEWLDAGLQQWDISRDAPYFGFEIPGEPGKYFYVWLDAPIGYMASFKNLCNRTPELDFDAFWGKDSTAELYHFIGKDIVNFHALFWPAMLEGAGFRKPTGINVHGYLTVNGQKMSKSRGTFIKARTYLDHLSPEYLRYYYAAKLGRGVDDLDLNLEDFVQKVNSDLVGKVVNIASRCAGFIQKGNAGLLVDTNAAPELTEAFLAAAPSIADAYEARDFARAMRETMALADRANAWIADKAPWSLNKQEGKQDEVQAVCATAINLFRQLVIFLKPVLPVLAADAEAFLNVAPLTWNDHTTLLANHQLNEFKPLMTRIDPVKVQAMTDASKEDLTASQTDTGAAAPAGNGELAKDPLSPEIDFDTFAAVDLRVALIVKAEHVEGADKLLRLTLDIGDEQRNVFSGIKSAYPDPSKLDGRLTMMIANLKPRKMKFGISEGMVMAAGPGGEEIYLLSPDSGAKPGQRIK.

Positions 14 to 24 (PYANGSIHLGH) match the 'HIGH' region motif. Residues Cys-145, Cys-148, Cys-158, and Cys-161 each coordinate Zn(2+). Residues 331 to 335 (KMSKS) carry the 'KMSKS' region motif. Residue Lys-334 coordinates ATP. A disordered region spans residues 545–572 (ASKEDLTASQTDTGAAAPAGNGELAKDP). Positions 581 to 683 (TFAAVDLRVA…SGAKPGQRIK (103 aa)) constitute a tRNA-binding domain.

It belongs to the class-I aminoacyl-tRNA synthetase family. MetG type 1 subfamily. Homodimer. Zn(2+) serves as cofactor.

It is found in the cytoplasm. The catalysed reaction is tRNA(Met) + L-methionine + ATP = L-methionyl-tRNA(Met) + AMP + diphosphate. Its function is as follows. Is required not only for elongation of protein synthesis but also for the initiation of all mRNA translation through initiator tRNA(fMet) aminoacylation. The polypeptide is Methionine--tRNA ligase (Pseudomonas fluorescens (strain Pf0-1)).